The chain runs to 135 residues: Translation initiation factor 2 subunit beta (135 aa).

It belongs to the eIF-2-beta/eIF-5 family. In terms of assembly, heterotrimer composed of an alpha, a beta and a gamma chain.

Its function is as follows. eIF-2 functions in the early steps of protein synthesis by forming a ternary complex with GTP and initiator tRNA. The sequence is that of Translation initiation factor 2 subunit beta (eif2b) from Methanothermobacter thermautotrophicus (strain ATCC 29096 / DSM 1053 / JCM 10044 / NBRC 100330 / Delta H) (Methanobacterium thermoautotrophicum).